Here is a 330-residue protein sequence, read N- to C-terminus: Transcriptional regulatory protein PHO23 (330 aa).

The interval 139–272 (EKIESKSNSK…NSNNSRISRP (134 aa)) is disordered. Positions 231–254 (TAVSPSTISTATAVNNGRIGTSTA) are enriched in polar residues. Residues 255-269 (SRGVSSVGNSNNSRI) are compositionally biased toward low complexity. The PHD-type zinc finger occupies 280–329 (PLYCYCNQVAYGEMVGCDGADCELEWFHLPCIGLETLPKGKWYCDDCKKK). The Zn(2+) site is built by Cys-283, Cys-285, Cys-296, Cys-301, His-307, Cys-310, Cys-323, and Cys-326.

This sequence belongs to the ING family. Interacts with H3K4me3 and to a lesser extent with H3K4me2. Component of the RPD3C(L) complex composed of at least ASH1, CTI6, DEP1, PHO23, RPD3, RXT2, RXT3, SAP30, SDS3, SIN3, UME1 and UME6.

The protein resides in the nucleus. Component of the RPD3C(L) histone deacetylase complex (HDAC) responsible for the deacetylation of lysine residues on the N-terminal part of the core histones (H2A, H2B, H3 and H4). Histone deacetylation gives a tag for epigenetic repression and plays an important role in transcriptional regulation, cell cycle progression and developmental events. In Saccharomyces cerevisiae (strain ATCC 204508 / S288c) (Baker's yeast), this protein is Transcriptional regulatory protein PHO23 (PHO23).